The sequence spans 142 residues: Cell division protein SepF (142 aa).

It belongs to the SepF family. As to quaternary structure, homodimer. Interacts with FtsZ.

It localises to the cytoplasm. Its function is as follows. Cell division protein that is part of the divisome complex and is recruited early to the Z-ring. Probably stimulates Z-ring formation, perhaps through the cross-linking of FtsZ protofilaments. Its function overlaps with FtsA. The chain is Cell division protein SepF from Syntrophomonas wolfei subsp. wolfei (strain DSM 2245B / Goettingen).